Here is a 40-residue protein sequence, read N- to C-terminus: Dolichyl-diphosphooligosaccharide--protein glycosyltransferase subunit 4 (40 aa).

Residues 1–4 (MITD) are Lumenal-facing. The chain crosses the membrane as a helical span at residues 5-25 (VQLAIFSNVLGVFLFLLVVAY). Residues 26 to 40 (HYINANTGKSIIKSK) are Cytoplasmic-facing.

Belongs to the OST4 family. Component of the oligosaccharyltransferase (OST) complex.

The protein localises to the endoplasmic reticulum membrane. Subunit of the oligosaccharyl transferase (OST) complex that catalyzes the initial transfer of a defined glycan (Glc(3)Man(9)GlcNAc(2) in eukaryotes) from the lipid carrier dolichol-pyrophosphate to an asparagine residue within an Asn-X-Ser/Thr consensus motif in nascent polypeptide chains, the first step in protein N-glycosylation. N-glycosylation occurs cotranslationally and the complex associates with the Sec61 complex at the channel-forming translocon complex that mediates protein translocation across the endoplasmic reticulum (ER). All subunits are required for a maximal enzyme activity. This is Dolichyl-diphosphooligosaccharide--protein glycosyltransferase subunit 4 from Drosophila grimshawi (Hawaiian fruit fly).